Here is a 343-residue protein sequence, read N- to C-terminus: Heat-inducible transcription repressor HrcA (343 aa).

The protein belongs to the HrcA family.

In terms of biological role, negative regulator of class I heat shock genes (grpE-dnaK-dnaJ and groELS operons). Prevents heat-shock induction of these operons. This is Heat-inducible transcription repressor HrcA from Mycobacterium ulcerans (strain Agy99).